Consider the following 1168-residue polypeptide: Transcription-repair-coupling factor (1168 aa).

The Helicase ATP-binding domain maps to Asp-633–Ile-794. Gly-646–Thr-653 provides a ligand contact to ATP. The DEEQ box motif lies at Asp-747–Gln-750. Positions Val-808–Asn-969 constitute a Helicase C-terminal domain.

It in the N-terminal section; belongs to the UvrB family. In the C-terminal section; belongs to the helicase family. RecG subfamily.

The protein localises to the cytoplasm. Couples transcription and DNA repair by recognizing RNA polymerase (RNAP) stalled at DNA lesions. Mediates ATP-dependent release of RNAP and its truncated transcript from the DNA, and recruitment of nucleotide excision repair machinery to the damaged site. This chain is Transcription-repair-coupling factor, found in Staphylococcus aureus (strain MRSA252).